Consider the following 1461-residue polypeptide: Regulation of nuclear pre-mRNA domain-containing protein 2 (1461 aa).

N-acetylalanine is present on Ala2. Phosphoserine is present on Ser16. The region spanning 19–149 (SAGALESSLD…ALREALSTTF (131 aa)) is the CID domain. Disordered regions lie at residues 311–438 (STLP…TSLS) and 469–504 (NTGV…TTSH). Residues 352-368 (ESEKSATPEPVTDNRDV) show a composition bias toward basic and acidic residues. Phosphoserine is present on Ser356. Thr358 is modified (phosphothreonine). A compositionally biased stretch (acidic residues) spans 369 to 378 (EDMELSDVED). Ser374 carries the phosphoserine modification. The span at 379–394 (DGSKIIVEDRKEKPAE) shows a compositional bias: basic and acidic residues. Residues 397–416 (AVSTSVPTKPTENISKASSC) are compositionally biased toward polar residues. Composition is skewed to low complexity over residues 417–426 (TPVPVTMTAT) and 473–491 (SPAS…NLTS). Ser473, Ser476, and Ser479 each carry phosphoserine. Phosphothreonine is present on Thr482. Ser485 carries the post-translational modification Phosphoserine. At Thr517 the chain carries Phosphothreonine. The segment at 547–623 (TGNPVPASEA…SPGLPSTTFK (77 aa)) is disordered. A compositionally biased stretch (low complexity) spans 553–566 (ASEAASQSTSASPA). Phosphoserine is present on Ser564. The span at 567 to 583 (NTTVSTIKGRNLPSSAQ) shows a compositional bias: polar residues. Ser593 is modified (phosphoserine). Residues 593-614 (SPNSSTSEVSSTSASKASIGQS) show a composition bias toward low complexity. The residue at position 598 (Thr598) is a Phosphothreonine. Ser614, Ser663, Ser665, and Ser716 each carry phosphoserine. 5 disordered regions span residues 696–849 (GSSA…MMNL), 900–997 (SENC…EKVL), 1016–1102 (ASRK…SGEP), 1132–1312 (STSG…APPL), and 1340–1461 (FGVL…PPRY). A Phosphothreonine modification is found at Thr723. Ser730 is modified (phosphoserine). Position 732 is a phosphothreonine (Thr732). Positions 742-752 (PTSSSVDTMSL) are enriched in polar residues. Phosphoserine is present on residues Ser758 and Ser762. The span at 758-768 (SPGSSTPSSTR) shows a compositional bias: low complexity. Thr763 carries the phosphothreonine modification. 8 positions are modified to phosphoserine: Ser769, Ser817, Ser826, Ser900, Ser909, Ser928, Ser965, and Ser976. Over residues 927–954 (RSPSPSKNDSFFTPDSNHNSLSQSTTGH) the composition is skewed to polar residues. A compositionally biased stretch (polar residues) spans 1031–1055 (SKGTPSDGVSLSNLTQPSLTATDQQ). A phosphoserine mark is found at Ser1068 and Ser1099. A compositionally biased stretch (low complexity) spans 1141 to 1150 (GPSSASELAS). Over residues 1151 to 1160 (LGGGGSGGLT) the composition is skewed to gly residues. Over residues 1174 to 1189 (FQESVGSFRSNSFNST) the composition is skewed to polar residues. 2 stretches are compositionally biased toward pro residues: residues 1267–1277 (FPTPPPPPPPG) and 1290–1299 (STPPPPPPPV). An Asymmetric dimethylarginine modification is found at Arg1366. A compositionally biased stretch (gly residues) spans 1382–1391 (PHGGGGGGGS). A compositionally biased stretch (basic and acidic residues) spans 1417 to 1434 (PRPDFRPREPFLSRDPFH). Asymmetric dimethylarginine is present on residues Arg1424 and Arg1430.

Associates with the RNA polymerase II complex.

The sequence is that of Regulation of nuclear pre-mRNA domain-containing protein 2 (RPRD2) from Homo sapiens (Human).